The primary structure comprises 343 residues: 4-hydroxy-2-oxovalerate aldolase 1 (343 aa).

The region spanning 8-260 (ITVHDMSLRD…ETGVDVFAIS (253 aa)) is the Pyruvate carboxyltransferase domain. 16-17 (RD) contributes to the substrate binding site. Mn(2+) is bound at residue aspartate 17. The Proton acceptor role is filled by histidine 20. Substrate-binding residues include serine 170 and histidine 199. Mn(2+)-binding residues include histidine 199 and histidine 201. Tyrosine 290 serves as a coordination point for substrate.

Belongs to the 4-hydroxy-2-oxovalerate aldolase family.

It carries out the reaction (S)-4-hydroxy-2-oxopentanoate = acetaldehyde + pyruvate. In Burkholderia cenocepacia (strain ATCC BAA-245 / DSM 16553 / LMG 16656 / NCTC 13227 / J2315 / CF5610) (Burkholderia cepacia (strain J2315)), this protein is 4-hydroxy-2-oxovalerate aldolase 1 (bphI).